We begin with the raw amino-acid sequence, 59 residues long: MKILSILLIALVICSISICTEAFGLIDVKCSASRECWVACKKVTGSGQGKCQNNQCRCY.

A signal peptide spans 1-22; the sequence is MKILSILLIALVICSISICTEA. Cystine bridges form between C30-C51, C36-C56, and C40-C58.

It belongs to the short scorpion toxin superfamily. Potassium channel inhibitor family. Alpha-KTx 16 subfamily. In terms of tissue distribution, expressed by the venom gland.

Its subcellular location is the secreted. Functionally, may play a role in blocking voltage-gated potassium channels Kv1.2/KCNA2, and Kv1.3/KCNA3. Blocks the voltage-gated potassium channel Kv1.3/KCNA3, with an IC(50) of 118.3 +-55.8 nM. The protein is Potassium channel toxin alpha-KTx 16.7 of Mesobuthus gibbosus (Mediterranean checkered scorpion).